The following is a 292-amino-acid chain: AT-hook motif nuclear-localized protein 23 (292 aa).

Residues 23-100 (HLHHNSSSDD…SKNKPKPPVI (78 aa)) are disordered. The span at 60 to 79 (SGGGSGSSGGGGGHGGGGDV) shows a compositional bias: gly residues. The a.T hook DNA-binding region spans 82–94 (RRPRGRPPGSKNK). The PPC domain maps to 106–242 (ANTLRAHILE…EDEQQQQLGG (137 aa)).

The protein resides in the nucleus. Functionally, transcription factor that specifically binds AT-rich DNA sequences related to the nuclear matrix attachment regions (MARs). The polypeptide is AT-hook motif nuclear-localized protein 23 (Arabidopsis thaliana (Mouse-ear cress)).